A 443-amino-acid polypeptide reads, in one-letter code: Na(+)-translocating NADH-quinone reductase subunit A (443 aa).

Belongs to the NqrA family. Composed of six subunits; NqrA, NqrB, NqrC, NqrD, NqrE and NqrF.

It carries out the reaction a ubiquinone + n Na(+)(in) + NADH + H(+) = a ubiquinol + n Na(+)(out) + NAD(+). In terms of biological role, NQR complex catalyzes the reduction of ubiquinone-1 to ubiquinol by two successive reactions, coupled with the transport of Na(+) ions from the cytoplasm to the periplasm. NqrA to NqrE are probably involved in the second step, the conversion of ubisemiquinone to ubiquinol. The sequence is that of Na(+)-translocating NADH-quinone reductase subunit A from Mannheimia succiniciproducens (strain KCTC 0769BP / MBEL55E).